Consider the following 870-residue polypeptide: Probable coatomer subunit gamma (870 aa).

HEAT repeat units follow at residues 60-97 (TEAT…VSDD), 99-133 (IIVT…TGML), 168-205 (EVVR…NDRL), 278-315 (SEIQ…AHPN), 316-350 (AVMS…GAES), and 389-425 (HTVM…ENPD).

Belongs to the COPG family. As to quaternary structure, oligomeric complex that consists of at least the alpha, beta, beta', gamma, delta, epsilon and zeta subunits.

Its subcellular location is the cytoplasm. The protein resides in the golgi apparatus membrane. It is found in the cytoplasmic vesicle. The protein localises to the COPI-coated vesicle membrane. Its function is as follows. The coatomer is a cytosolic protein complex that binds to dilysine motifs and reversibly associates with Golgi non-clathrin-coated vesicles, which further mediate biosynthetic protein transport from the ER, via the Golgi up to the trans Golgi network. Coatomer complex is required for budding from Golgi membranes, and is essential for the retrograde Golgi-to-ER transport of dilysine-tagged proteins. This is Probable coatomer subunit gamma from Caenorhabditis elegans.